The sequence spans 136 residues: Protein NrdI (136 aa).

Belongs to the NrdI family.

Its function is as follows. Probably involved in ribonucleotide reductase function. In Shigella boydii serotype 4 (strain Sb227), this protein is Protein NrdI.